The sequence spans 108 residues: Nucleoid-associated protein CPS_3743 (108 aa).

Positions 87–108 (NKDKMGALTGGMQLPPGMKMPF) are disordered.

The protein belongs to the YbaB/EbfC family. As to quaternary structure, homodimer.

It localises to the cytoplasm. The protein resides in the nucleoid. In terms of biological role, binds to DNA and alters its conformation. May be involved in regulation of gene expression, nucleoid organization and DNA protection. The chain is Nucleoid-associated protein CPS_3743 from Colwellia psychrerythraea (strain 34H / ATCC BAA-681) (Vibrio psychroerythus).